The following is a 294-amino-acid chain: tRNA-cytidine(32) 2-sulfurtransferase (294 aa).

Residues Ser-58–Ser-63 carry the PP-loop motif motif. [4Fe-4S] cluster is bound by residues Cys-133, Cys-136, and Cys-224.

Belongs to the TtcA family. As to quaternary structure, homodimer. The cofactor is Mg(2+). It depends on [4Fe-4S] cluster as a cofactor.

Its subcellular location is the cytoplasm. The enzyme catalyses cytidine(32) in tRNA + S-sulfanyl-L-cysteinyl-[cysteine desulfurase] + AH2 + ATP = 2-thiocytidine(32) in tRNA + L-cysteinyl-[cysteine desulfurase] + A + AMP + diphosphate + H(+). It participates in tRNA modification. Functionally, catalyzes the ATP-dependent 2-thiolation of cytidine in position 32 of tRNA, to form 2-thiocytidine (s(2)C32). The sulfur atoms are provided by the cysteine/cysteine desulfurase (IscS) system. The polypeptide is tRNA-cytidine(32) 2-sulfurtransferase (Ruegeria pomeroyi (strain ATCC 700808 / DSM 15171 / DSS-3) (Silicibacter pomeroyi)).